The sequence spans 423 residues: MMTSTDLDALMTDLGQRARKAARILALTPSAAKDKALRAAAQAIRIDTKLILAANAKDMEAGEAKGLSKAMLDRLMLNPARVEAMAKGLEDIARLPDPVGRSLAEWTRPNGMSIARIAVPLGVIGIIYESRPNVTADAAALCLKSGNATILRGGSESFHSSQAILTALKGGFTACGLPADAVQMVPTTDRAAVGVMLRLSNYIDVIVPRGGKSLVERVVAESRIPLFQHLEGICHTYVDGSADLEMAKTIVLNAKMRRTGICGATETLLVDRACAGTHLAPLVAMLIDAGCEVRGDAVAQAADARVIPASDADWSTEYLDAIISVGVVDGVGAAVEHINTHGSHHTEAIVAEDSQVAETFLNGCDSAIVLWNASTQFADGGEFGMGAEIGISTGKMHARGPVGVEQLCTFKYVVKGNGQVRPG.

This sequence belongs to the gamma-glutamyl phosphate reductase family.

The protein localises to the cytoplasm. The catalysed reaction is L-glutamate 5-semialdehyde + phosphate + NADP(+) = L-glutamyl 5-phosphate + NADPH + H(+). It participates in amino-acid biosynthesis; L-proline biosynthesis; L-glutamate 5-semialdehyde from L-glutamate: step 2/2. Catalyzes the NADPH-dependent reduction of L-glutamate 5-phosphate into L-glutamate 5-semialdehyde and phosphate. The product spontaneously undergoes cyclization to form 1-pyrroline-5-carboxylate. This is Gamma-glutamyl phosphate reductase from Paramagnetospirillum magneticum (strain ATCC 700264 / AMB-1) (Magnetospirillum magneticum).